The sequence spans 265 residues: Hydroxyethylthiazole kinase (265 aa).

Substrate is bound at residue Met41. ATP-binding residues include Arg117 and Ser163. Gly190 is a binding site for substrate.

The protein belongs to the Thz kinase family. It depends on Mg(2+) as a cofactor.

The enzyme catalyses 5-(2-hydroxyethyl)-4-methylthiazole + ATP = 4-methyl-5-(2-phosphooxyethyl)-thiazole + ADP + H(+). It functions in the pathway cofactor biosynthesis; thiamine diphosphate biosynthesis; 4-methyl-5-(2-phosphoethyl)-thiazole from 5-(2-hydroxyethyl)-4-methylthiazole: step 1/1. Its function is as follows. Catalyzes the phosphorylation of the hydroxyl group of 4-methyl-5-beta-hydroxyethylthiazole (THZ). This is Hydroxyethylthiazole kinase from Pediococcus pentosaceus (strain ATCC 25745 / CCUG 21536 / LMG 10740 / 183-1w).